A 593-amino-acid polypeptide reads, in one-letter code: PiggyBac transposable element-derived protein 3 (593 aa).

Disordered regions lie at residues I27–L53 and S69–R105. Over residues S38–G47 the composition is skewed to acidic residues. At S86 the chain carries Phosphoserine.

As to expression, expressed in heart and oocytes, but not in granulosa cells (at protein level).

The protein localises to the nucleus. Functionally, binds in vitro to PGBD3-related transposable elements, called MER85s; these non-autonomous 140 bp elements are characterized by the presence of PGBD3 terminal inverted repeats and the absence of internal transposase ORF. The chain is PiggyBac transposable element-derived protein 3 (PGBD3) from Homo sapiens (Human).